The sequence spans 514 residues: Lysine--tRNA ligase (514 aa).

Residues 1–13 (MSKPNNQNQQNNQ) are compositionally biased toward low complexity. The interval 1-21 (MSKPNNQNQQNNQEPAPEDAN) is disordered. Residues Glu-422 and Glu-429 each coordinate Mg(2+).

The protein belongs to the class-II aminoacyl-tRNA synthetase family. As to quaternary structure, homodimer. Requires Mg(2+) as cofactor.

Its subcellular location is the cytoplasm. It carries out the reaction tRNA(Lys) + L-lysine + ATP = L-lysyl-tRNA(Lys) + AMP + diphosphate. The polypeptide is Lysine--tRNA ligase (Psychrobacter cryohalolentis (strain ATCC BAA-1226 / DSM 17306 / VKM B-2378 / K5)).